The primary structure comprises 409 residues: Arginine deiminase (409 aa).

The active-site Amidino-cysteine intermediate is Cys398.

It belongs to the arginine deiminase family.

The protein resides in the cytoplasm. It carries out the reaction L-arginine + H2O = L-citrulline + NH4(+). Its pathway is amino-acid degradation; L-arginine degradation via ADI pathway; carbamoyl phosphate from L-arginine: step 1/2. This chain is Arginine deiminase, found in Metamycoplasma arthritidis (strain 158L3-1) (Mycoplasma arthritidis).